Reading from the N-terminus, the 448-residue chain is tRNA-2-methylthio-N(6)-dimethylallyladenosine synthase (448 aa).

The 117-residue stretch at 3–119 (GRVYVKTHGC…LPEMIDRARD (117 aa)) folds into the MTTase N-terminal domain. Residues cysteine 12, cysteine 49, cysteine 82, cysteine 156, cysteine 160, and cysteine 163 each coordinate [4Fe-4S] cluster. The 233-residue stretch at 142-374 (RAEGPTAFVS…QETINANARR (233 aa)) folds into the Radical SAM core domain. The region spanning 377–440 (ESMVGTVQRV…PNSLRGELLG (64 aa)) is the TRAM domain.

Belongs to the methylthiotransferase family. MiaB subfamily. In terms of assembly, monomer. [4Fe-4S] cluster is required as a cofactor.

It localises to the cytoplasm. The catalysed reaction is N(6)-dimethylallyladenosine(37) in tRNA + (sulfur carrier)-SH + AH2 + 2 S-adenosyl-L-methionine = 2-methylsulfanyl-N(6)-dimethylallyladenosine(37) in tRNA + (sulfur carrier)-H + 5'-deoxyadenosine + L-methionine + A + S-adenosyl-L-homocysteine + 2 H(+). Functionally, catalyzes the methylthiolation of N6-(dimethylallyl)adenosine (i(6)A), leading to the formation of 2-methylthio-N6-(dimethylallyl)adenosine (ms(2)i(6)A) at position 37 in tRNAs that read codons beginning with uridine. This Alkalilimnicola ehrlichii (strain ATCC BAA-1101 / DSM 17681 / MLHE-1) protein is tRNA-2-methylthio-N(6)-dimethylallyladenosine synthase.